The following is a 315-amino-acid chain: Calcium homeostasis modulator protein 6 (315 aa).

Residues 1 to 21 (MEKFKAVLDLQIKHRSALGYG) are Cytoplasmic-facing. Residues 22-37 (LVTLLTAGGEKIFSTV) traverse the membrane as a helical segment. The Extracellular portion of the chain corresponds to 38–46 (VFQCPCTAT). 3 disulfides stabilise this stretch: C41–C127, C43–C156, and C140–C147. A helical membrane pass occupies residues 47 to 68 (LNLTYGLVFLLVPALALFLLGY). Over 69–103 (ALSARTWRLLTGCCSRSASTRSSSGLRSTLVCAQV) the chain is Cytoplasmic. Residues 104–128 (SAVAALAPLTWVAVALLGGSFYQCA) traverse the membrane as a helical segment. Residues 129–169 (VSGSTRLASYLCKDRNHSCIAKLPQVPCNKQEAEMQEILSQ) lie on the Extracellular side of the membrane. A helical transmembrane segment spans residues 170 to 192 (LKAQSQVLGWVLIAAVIFLLLVF). The Cytoplasmic segment spans residues 193–315 (KCVSRCFSPV…DAAMANTHGV (123 aa)).

Belongs to the CALHM family. Oligomerizes to form decameric and undecameric channels.

The protein resides in the cell membrane. It catalyses the reaction ATP(in) = ATP(out). Its function is as follows. Pore-forming subunit of an ATP-permeable channel. In response to pathogen-derived and proinflammatory stimuli, relocates from intracellular compartments to NK-dendritic cell and NK-macrophage immune synapses where it mediates ATP efflux and NK cell activation involved in antimicrobial and antitumor responses. May assemble to form gap junction channel-like structures with gating and ion conductance likely regulated by membrane lipids and voltage rather than by extracellular calcium levels. This Rattus norvegicus (Rat) protein is Calcium homeostasis modulator protein 6.